Consider the following 101-residue polypeptide: Small ribosomal subunit protein uS10 (101 aa).

It belongs to the universal ribosomal protein uS10 family. Part of the 30S ribosomal subunit.

Involved in the binding of tRNA to the ribosomes. The chain is Small ribosomal subunit protein uS10 from Flavobacterium johnsoniae (strain ATCC 17061 / DSM 2064 / JCM 8514 / BCRC 14874 / CCUG 350202 / NBRC 14942 / NCIMB 11054 / UW101) (Cytophaga johnsonae).